A 912-amino-acid polypeptide reads, in one-letter code: Protein transport protein SEC24-2 (912 aa).

Basic residues predominate over residues 1-11; the sequence is MSNPSRPKKRV. Disordered stretches follow at residues 1–83 and 102–129; these read MSNP…QQIS and PNAYYQPNNGNNIQPTGENKPSLTPGRP. 3 stretches are compositionally biased toward polar residues: residues 33–45, 53–74, and 106–129; these read SGQTMQSQVSGSA, GQFTQPMNASDAQNQPQFMTPA, and YQPNNGNNIQPTGENKPSLTPGRP. Zn(2+)-binding residues include Cys226, Cys229, Cys248, and Cys251. Residues 226-251 are zinc finger-like; the sequence is CRRCRGYLNPFVKILQVESKWRCNFC.

This sequence belongs to the SEC23/SEC24 family. SEC24 subfamily. As to quaternary structure, the COPII coat is composed of at least 5 proteins: the SEC23/24 complex, the SEC13/31 complex, and the protein SAR1. Golgi apparatus membrane; Peripheral membrane protein; Cytoplasmic side.

It is found in the cytoplasm. It localises to the cytoplasmic vesicle. The protein resides in the COPII-coated vesicle membrane. The protein localises to the endoplasmic reticulum membrane. Its subcellular location is the golgi apparatus membrane. In terms of biological role, component of the coat protein complex II (COPII) which promotes the formation of transport vesicles from the endoplasmic reticulum (ER). The coat has two main functions, the physical deformation of the endoplasmic reticulum membrane into vesicles and the selection of cargo molecules. This is Protein transport protein SEC24-2 (SEC242) from Naumovozyma castellii (Yeast).